We begin with the raw amino-acid sequence, 812 residues long: Valine--tRNA ligase (812 aa).

A 'HIGH' region motif is present at residues 46-56; the sequence is PTVSGQLHIGH. Positions 536 to 540 match the 'KMSKS' region motif; sequence KMSKS. Lys539 provides a ligand contact to ATP.

It belongs to the class-I aminoacyl-tRNA synthetase family. ValS type 2 subfamily. As to quaternary structure, monomer.

It is found in the cytoplasm. The catalysed reaction is tRNA(Val) + L-valine + ATP = L-valyl-tRNA(Val) + AMP + diphosphate. In terms of biological role, catalyzes the attachment of valine to tRNA(Val). As ValRS can inadvertently accommodate and process structurally similar amino acids such as threonine, to avoid such errors, it has a 'posttransfer' editing activity that hydrolyzes mischarged Thr-tRNA(Val) in a tRNA-dependent manner. The protein is Valine--tRNA ligase of Rickettsia akari (strain Hartford).